A 258-amino-acid polypeptide reads, in one-letter code: Thiazole synthase (258 aa).

The active-site Schiff-base intermediate with DXP is lysine 100. Residues glycine 161, 187-188 (AG), and 209-210 (NT) contribute to the 1-deoxy-D-xylulose 5-phosphate site.

Belongs to the ThiG family. In terms of assembly, homotetramer. Forms heterodimers with either ThiH or ThiS.

It is found in the cytoplasm. It catalyses the reaction [ThiS sulfur-carrier protein]-C-terminal-Gly-aminoethanethioate + 2-iminoacetate + 1-deoxy-D-xylulose 5-phosphate = [ThiS sulfur-carrier protein]-C-terminal Gly-Gly + 2-[(2R,5Z)-2-carboxy-4-methylthiazol-5(2H)-ylidene]ethyl phosphate + 2 H2O + H(+). It functions in the pathway cofactor biosynthesis; thiamine diphosphate biosynthesis. Its function is as follows. Catalyzes the rearrangement of 1-deoxy-D-xylulose 5-phosphate (DXP) to produce the thiazole phosphate moiety of thiamine. Sulfur is provided by the thiocarboxylate moiety of the carrier protein ThiS. In vitro, sulfur can be provided by H(2)S. This Campylobacter jejuni subsp. jejuni serotype O:23/36 (strain 81-176) protein is Thiazole synthase.